A 328-amino-acid chain; its full sequence is DNA-directed RNA polymerase subunit alpha (328 aa).

An alpha N-terminal domain (alpha-NTD) region spans residues M1–E232. The interval I248–P328 is alpha C-terminal domain (alpha-CTD).

Belongs to the RNA polymerase alpha chain family. In terms of assembly, homodimer. The RNAP catalytic core consists of 2 alpha, 1 beta, 1 beta' and 1 omega subunit. When a sigma factor is associated with the core the holoenzyme is formed, which can initiate transcription.

It catalyses the reaction RNA(n) + a ribonucleoside 5'-triphosphate = RNA(n+1) + diphosphate. In terms of biological role, DNA-dependent RNA polymerase catalyzes the transcription of DNA into RNA using the four ribonucleoside triphosphates as substrates. The polypeptide is DNA-directed RNA polymerase subunit alpha (Bordetella bronchiseptica (strain ATCC BAA-588 / NCTC 13252 / RB50) (Alcaligenes bronchisepticus)).